A 154-amino-acid chain; its full sequence is Anaerobic ribonucleoside-triphosphate reductase-activating protein (154 aa).

Cysteine 26, cysteine 30, and cysteine 33 together coordinate [4Fe-4S] cluster. S-adenosyl-L-methionine contacts are provided by residues 32–34 (GCY) and glycine 74.

It belongs to the organic radical-activating enzymes family. In terms of assembly, forms a tetramer composed of two NrdD and two NrdG subunits. [4Fe-4S] cluster serves as cofactor.

It localises to the cytoplasm. The enzyme catalyses glycyl-[protein] + reduced [flavodoxin] + S-adenosyl-L-methionine = glycin-2-yl radical-[protein] + semiquinone [flavodoxin] + 5'-deoxyadenosine + L-methionine + H(+). Activation of anaerobic ribonucleoside-triphosphate reductase under anaerobic conditions by generation of an organic free radical, using S-adenosylmethionine and reduced flavodoxin as cosubstrates to produce 5'-deoxy-adenosine. The sequence is that of Anaerobic ribonucleoside-triphosphate reductase-activating protein (nrdG) from Escherichia coli O157:H7.